Consider the following 311-residue polypeptide: Ribonuclease HIII (311 aa).

An RNase H type-2 domain is found at M95 to R311. D101, E102, and D206 together coordinate a divalent metal cation.

It belongs to the RNase HII family. RnhC subfamily. Mn(2+) is required as a cofactor. Mg(2+) serves as cofactor.

Its subcellular location is the cytoplasm. The enzyme catalyses Endonucleolytic cleavage to 5'-phosphomonoester.. Its function is as follows. Endonuclease that specifically degrades the RNA of RNA-DNA hybrids. This is Ribonuclease HIII from Bacillus cereus (strain ATCC 14579 / DSM 31 / CCUG 7414 / JCM 2152 / NBRC 15305 / NCIMB 9373 / NCTC 2599 / NRRL B-3711).